The following is a 1123-amino-acid chain: Ubiquitin carboxyl-terminal hydrolase 43 (1123 aa).

The interval 1–102 (MDLGPGDAAG…DGARPPGAQG (102 aa)) is disordered. Basic residues predominate over residues 17 to 28 (RPRRRRSLRRLF). The span at 29–39 (SRFLLALGSRS) shows a compositional bias: low complexity. The USP domain occupies 101–710 (QGLKNHGNTC…GAYILFYQKR (610 aa)). Cys110 functions as the Nucleophile in the catalytic mechanism. The segment at 202–221 (EGSSRGPVSEKLPPEATKTS) is disordered. His668 acts as the Proton acceptor in catalysis. Asymmetric dimethylarginine is present on Arg746. Disordered regions lie at residues 795–826 (ISMKAPTTSRAKQGPFKTMPLRWSFGSKEKPP), 854–886 (TGTAGEDEKSASPRSNVALPANSEDGGRAIERG), 959–1049 (FQMG…RIPE), and 1068–1099 (SSLRLPRKASRAPRGSALGMSQRTVPGEQASY). Ser969 carries the post-translational modification Phosphoserine. The segment covering 979-990 (KDSRRGTSELDR) has biased composition (basic and acidic residues). Positions 1016–1027 (VSPQVPPVSLVS) are enriched in low complexity. Residue Ser1041 is modified to Phosphoserine.

This sequence belongs to the peptidase C19 family. In terms of tissue distribution, expressed in brain, aorta and lung at low levels.

It carries out the reaction Thiol-dependent hydrolysis of ester, thioester, amide, peptide and isopeptide bonds formed by the C-terminal Gly of ubiquitin (a 76-residue protein attached to proteins as an intracellular targeting signal).. In terms of biological role, may recognize and hydrolyze the peptide bond at the C-terminal Gly of ubiquitin. Involved in the processing of poly-ubiquitin precursors as well as that of ubiquitinated proteins. This Homo sapiens (Human) protein is Ubiquitin carboxyl-terminal hydrolase 43 (USP43).